The sequence spans 138 residues: Probable prefoldin subunit 4 (138 aa).

It belongs to the prefoldin subunit beta family. As to quaternary structure, heterohexamer of two PFD-alpha type and four PFD-beta type subunits.

Binds specifically to cytosolic chaperonin (c-CPN) and transfers target proteins to it. Binds to nascent polypeptide chain and promotes folding in an environment in which there are many competing pathways for nonnative proteins. The polypeptide is Probable prefoldin subunit 4 (Drosophila melanogaster (Fruit fly)).